The following is a 60-amino-acid chain: Cytotoxin 1 (60 aa).

Intrachain disulfides connect Cys-3/Cys-21, Cys-14/Cys-38, Cys-42/Cys-53, and Cys-54/Cys-59.

It belongs to the three-finger toxin family. Short-chain subfamily. Type IA cytotoxin sub-subfamily. Monomer in solution; Homodimer and oligomer in the presence of negatively charged lipids forming a pore with a size ranging between 20 and 30 Angstroms. As to expression, expressed by the venom gland.

The protein localises to the secreted. Its subcellular location is the target cell membrane. Its function is as follows. Shows cytolytic activity on many different cells by forming pore in lipid membranes. In vivo, increases heart rate or kills the animal by cardiac arrest. In addition, it binds to heparin with high affinity, interacts with Kv channel-interacting protein 1 (KCNIP1) in a calcium-independent manner, and binds to integrin alpha-V/beta-3 (ITGAV/ITGB3) with moderate affinity. The protein is Cytotoxin 1 of Naja naja (Indian cobra).